The sequence spans 158 residues: MDFEKMKQWMEFAQQMYGGDFWKQVFDEDQKTPFMTNGQSPFPFAQQDQRGKGDASFPSMDIVDTVAEVQFLIYLPGYRKQDVHILSYGDYLVVKGQRFSYFNEQDFRQKEGKYGSFEKKIPLSDHLHGKMNAIFKDGILYITIQKDEGQAKTIVIDD.

The sHSP domain maps to 51–158 (GKGDASFPSM…GQAKTIVIDD (108 aa)).

Belongs to the small heat shock protein (HSP20) family. Forms homodimers, homotetramers and higher oligomers.

It is found in the cytoplasm. In terms of biological role, part of the cellular protein quality control system with a specific role in salt stress response. May facilitate protein homeostasis, together with chemical chaperones that accumulate during the salt stress response. Increased levels of YocM protects against both heat and salt stress. In vitro, displays an unusual aggregase chaperone activity. This Bacillus subtilis (strain 168) protein is Salt stress-responsive protein YocM (yocM).